Consider the following 125-residue polypeptide: Glycine cleavage system H protein (125 aa).

The region spanning 23-105 is the Lipoyl-binding domain; it reads VSTVGITEHA…FEGGWLFKVR (83 aa). Lys64 is modified (N6-lipoyllysine).

It belongs to the GcvH family. As to quaternary structure, the glycine cleavage system is composed of four proteins: P, T, L and H. The cofactor is (R)-lipoate.

Its function is as follows. The glycine cleavage system catalyzes the degradation of glycine. The H protein shuttles the methylamine group of glycine from the P protein to the T protein. The polypeptide is Glycine cleavage system H protein (Streptomyces coelicolor (strain ATCC BAA-471 / A3(2) / M145)).